We begin with the raw amino-acid sequence, 348 residues long: tRNA pseudouridine synthase D (348 aa).

The active-site Nucleophile is the D84. The 147-residue stretch at 162–308 folds into the TRUD domain; that stretch reads GVPNYFGPQR…ARMDRRPLCL (147 aa).

Belongs to the pseudouridine synthase TruD family.

The catalysed reaction is uridine(13) in tRNA = pseudouridine(13) in tRNA. In terms of biological role, responsible for synthesis of pseudouridine from uracil-13 in transfer RNAs. This chain is tRNA pseudouridine synthase D, found in Chromohalobacter salexigens (strain ATCC BAA-138 / DSM 3043 / CIP 106854 / NCIMB 13768 / 1H11).